The chain runs to 123 residues: Small ribosomal subunit protein uS12 (123 aa).

Aspartate 89 bears the 3-methylthioaspartic acid mark.

Belongs to the universal ribosomal protein uS12 family. Part of the 30S ribosomal subunit. Contacts proteins S8 and S17. May interact with IF1 in the 30S initiation complex.

With S4 and S5 plays an important role in translational accuracy. Its function is as follows. Interacts with and stabilizes bases of the 16S rRNA that are involved in tRNA selection in the A site and with the mRNA backbone. Located at the interface of the 30S and 50S subunits, it traverses the body of the 30S subunit contacting proteins on the other side and probably holding the rRNA structure together. The combined cluster of proteins S8, S12 and S17 appears to hold together the shoulder and platform of the 30S subunit. This is Small ribosomal subunit protein uS12 from Methylorubrum extorquens (strain PA1) (Methylobacterium extorquens).